Here is a 1374-residue protein sequence, read N- to C-terminus: Tripeptidyl-peptidase 2 (1374 aa).

The region spanning 62–558 (ALLLNKTDTE…QGMIKIATAY (497 aa)) is the Peptidase S8 domain. Catalysis depends on charge relay system residues Asp-93, His-314, and Ser-499.

The protein belongs to the peptidase S8 family. In terms of tissue distribution, expressed in intestinal fat-storing cells and some head neurons.

The catalysed reaction is Release of an N-terminal tripeptide from a polypeptide.. Its function is as follows. Component of the proteolytic cascade acting downstream of the 26S proteasome in the ubiquitin-proteasome pathway. Has a role in regulation of fat storage. The sequence is that of Tripeptidyl-peptidase 2 (tpp-2) from Caenorhabditis elegans.